We begin with the raw amino-acid sequence, 317 residues long: 17-beta-hydroxysteroid dehydrogenase type 6 (317 aa).

A signal peptide spans 1–17 (MWFYLVTLVGLYHLLRW). NAD(+) is bound at residue 33–57 (FITGCDSGFGNLLARQLDRRGMRVL). 2 N-linked (GlcNAc...) asparagine glycosylation sites follow: N71 and N161. Residue S164 coordinates substrate. Y176 (proton acceptor) is an active-site residue.

The protein belongs to the short-chain dehydrogenases/reductases (SDR) family. As to expression, detected in liver.

The protein localises to the microsome membrane. The protein resides in the early endosome membrane. The catalysed reaction is all-trans-retinol--[retinol-binding protein] + NAD(+) = all-trans-retinal--[retinol-binding protein] + NADH + H(+). The enzyme catalyses all-trans-retinol + NAD(+) = all-trans-retinal + NADH + H(+). It catalyses the reaction androsterone + NAD(+) = 5alpha-androstan-3,17-dione + NADH + H(+). It carries out the reaction testosterone + NAD(+) = androst-4-ene-3,17-dione + NADH + H(+). The catalysed reaction is 5alpha-androstane-3alpha,17beta-diol + NAD(+) = 17beta-hydroxy-5alpha-androstan-3-one + NADH + H(+). The enzyme catalyses 17beta-estradiol + NAD(+) = estrone + NADH + H(+). It catalyses the reaction 17beta-estradiol + NADP(+) = estrone + NADPH + H(+). It carries out the reaction 3alpha-hydroxy-5alpha-pregnan-20-one + NAD(+) = 5alpha-pregnane-3,20-dione + NADH + H(+). The catalysed reaction is 5alpha-androstane-3beta,17beta-diol + NAD(+) = 17beta-hydroxy-5alpha-androstan-3-one + NADH + H(+). The enzyme catalyses 3beta-hydroxy-5alpha-androstan-17-one + NAD(+) = 5alpha-androstan-3,17-dione + NADH + H(+). With respect to regulation, inhibited by carbenoxolone and phenyl arsenoxide. Its function is as follows. NAD-dependent oxidoreductase with broad substrate specificity that shows both oxidative and reductive activity (in vitro). Has 17-beta-hydroxysteroid dehydrogenase activity towards various steroids (in vitro). Converts 5-alpha-androstan-3-alpha,17-beta-diol to androsterone and estradiol to estrone (in vitro). Has 3-alpha-hydroxysteroid dehydrogenase activity towards androsterone (in vitro). Has retinol dehydrogenase activity towards all-trans-retinol (in vitro). The chain is 17-beta-hydroxysteroid dehydrogenase type 6 (Hsd17b6) from Mus musculus (Mouse).